The sequence spans 481 residues: Replication factor C large subunit (481 aa).

Residue 43 to 50 coordinates ATP; the sequence is GKPGIGKT. Basic and acidic residues-rich tracts occupy residues 408 to 433 and 441 to 457; these read KVEREKEPEPKKKGRKKAESPAKDAD and VPKEELPVKSAPEERPA. The interval 408–481 is disordered; that stretch reads KVEREKEPEP…HNQSTLFDGF (74 aa). A compositionally biased stretch (polar residues) spans 471 to 481; sequence AHNQSTLFDGF.

This sequence belongs to the activator 1 small subunits family. RfcL subfamily. In terms of assembly, heteromultimer composed of small subunits (RfcS) and large subunits (RfcL).

Part of the RFC clamp loader complex which loads the PCNA sliding clamp onto DNA. The polypeptide is Replication factor C large subunit (Methanoregula boonei (strain DSM 21154 / JCM 14090 / 6A8)).